Reading from the N-terminus, the 227-residue chain is Extracellular deoxyribonuclease (227 aa).

The signal sequence occupies residues 1-20; it reads MFRPLLSFTLARLVSLPLHA.

Belongs to the EndA/NucM nuclease family.

The protein resides in the secreted. The sequence is that of Extracellular deoxyribonuclease from Aeromonas hydrophila.